The primary structure comprises 597 residues: Siderophore iron transporter 2 (597 aa).

Ser-46 is subject to Phosphoserine. Helical transmembrane passes span Ile-65 to Thr-85, Phe-97 to Val-117, Ser-131 to Ser-151, Val-159 to Ile-179, Ile-190 to Ala-210, Tyr-225 to Leu-245, Leu-281 to Ser-301, Thr-312 to Tyr-332, Val-357 to Leu-377, Leu-390 to Met-410, Leu-419 to Ile-439, Leu-448 to Ile-468, Leu-485 to Trp-505, and Lys-558 to Ile-578.

The protein belongs to the major facilitator superfamily.

The protein resides in the membrane. Involved in the transport of siderophore iron and so has a role in iron homeostasis. This chain is Siderophore iron transporter 2 (str2), found in Schizosaccharomyces pombe (strain 972 / ATCC 24843) (Fission yeast).